The sequence spans 91 residues: Small ribosomal subunit protein uS19 (91 aa).

Belongs to the universal ribosomal protein uS19 family.

Functionally, protein S19 forms a complex with S13 that binds strongly to the 16S ribosomal RNA. This is Small ribosomal subunit protein uS19 from Afipia carboxidovorans (strain ATCC 49405 / DSM 1227 / KCTC 32145 / OM5) (Oligotropha carboxidovorans).